Here is a 178-residue protein sequence, read N- to C-terminus: Probable DNA-directed RNA polymerase subunit delta (178 aa).

The HTH HARE-type domain maps to 14–81; the sequence is LSLIDVAHFI…GNNTWGLRAW (68 aa). Disordered regions lie at residues 88 to 122 and 141 to 178; these read DEEVQTQTTPKKKRKSDDDEDEDEEILDDDVDYDD and LDEDEDDDDHLPDGIEGDLATVEDDYTDGDYTEDPEDK. Composition is skewed to acidic residues over residues 105-122, 141-150, and 161-178; these read DDEDEDEEILDDDVDYDD, LDEDEDDDDH, and TVEDDYTDGDYTEDPEDK.

This sequence belongs to the RpoE family. As to quaternary structure, RNAP is composed of a core of 2 alpha, a beta and a beta' subunits. The core is associated with a delta subunit and one of several sigma factors.

Functionally, participates in both the initiation and recycling phases of transcription. In the presence of the delta subunit, RNAP displays an increased specificity of transcription, a decreased affinity for nucleic acids, and an increased efficiency of RNA synthesis because of enhanced recycling. The protein is Probable DNA-directed RNA polymerase subunit delta of Listeria monocytogenes serovar 1/2a (strain ATCC BAA-679 / EGD-e).